The following is a 408-amino-acid chain: Neutral cholesterol ester hydrolase 1 (408 aa).

The Cytoplasmic segment spans residues 1–4; that stretch reads MRSS. The helical; Signal-anchor for type II membrane protein transmembrane segment at 5–25 threads the bilayer; sequence CVLLAALLALAAYYVYIPLPS. At 26–408 the chain is on the lumenal side; sequence AVSDPWKLML…SYIKWLDQNL (383 aa). The Involved in the stabilization of the negatively charged intermediate by the formation of the oxyanion hole motif lies at 113–115; it reads HGG. Serine 191 is a catalytic residue. N-linked (GlcNAc...) asparagine glycosylation is present at asparagine 270. Residue aspartate 348 is part of the active site. Residue asparagine 367 is glycosylated (N-linked (GlcNAc...) asparagine). Histidine 378 is a catalytic residue. Asparagine 389 carries N-linked (GlcNAc...) asparagine glycosylation.

It belongs to the 'GDXG' lipolytic enzyme family. In terms of processing, N-glycosylated. In terms of tissue distribution, present in brain, heart, kidney, lung, spinal cord and testis but not liver (at protein level). Expressed in peritoneal macrophages and kidney.

The protein resides in the cell membrane. The protein localises to the microsome. The enzyme catalyses a 1-O-alkyl-2-acetyl-sn-glycerol + H2O = a 1-O-alkyl-sn-glycerol + acetate + H(+). It carries out the reaction 1-O-hexadecyl-2-acetyl-sn-glycerol + H2O = 1-O-hexadecyl-sn-glycerol + acetate + H(+). The catalysed reaction is a cholesterol ester + H2O = cholesterol + a fatty acid + H(+). It catalyses the reaction cholesteryl (9Z-octadecenoate) + H2O = cholesterol + (9Z)-octadecenoate + H(+). Its activity is regulated as follows. Inhibited by bulky trifluoromethyl ketones. In terms of biological role, hydrolyzes 2-acetyl monoalkylglycerol ether (1-O-alkyl-2-acetyl-sn-glycerol), the penultimate precursor of the pathway for de novo synthesis of platelet-activating factor. May be responsible for the hydrolysis of cholesterol esters (such as cholesteryl (9Z-octadecenoate)) in macrophages. Also involved in organ detoxification by hydrolyzing exogenous organophosphorus compounds. The chain is Neutral cholesterol ester hydrolase 1 (Nceh1) from Mus musculus (Mouse).